The chain runs to 188 residues: Der GTPase-activating protein YihI (188 aa).

2 disordered regions span residues 1–80 and 162–188; these read MKQP…VPVP and DEDDVEREEKQEDILQLLKRGNPKDTF. Residues 27-37 show a composition bias toward basic and acidic residues; the sequence is TRDELDAEARD. The span at 47–57 shows a compositional bias: polar residues; that stretch reads NRSGARTNVEG.

It belongs to the YihI family. As to quaternary structure, interacts with Der.

Its function is as follows. A GTPase-activating protein (GAP) that modifies Der/EngA GTPase function. May play a role in ribosome biogenesis. The chain is Der GTPase-activating protein YihI from Yersinia pseudotuberculosis serotype O:1b (strain IP 31758).